The sequence spans 179 residues: Large ribosomal subunit protein uL5 (179 aa).

This sequence belongs to the universal ribosomal protein uL5 family. In terms of assembly, part of the 50S ribosomal subunit; part of the 5S rRNA/L5/L18/L25 subcomplex. Contacts the 5S rRNA and the P site tRNA. Forms a bridge to the 30S subunit in the 70S ribosome.

Functionally, this is one of the proteins that bind and probably mediate the attachment of the 5S RNA into the large ribosomal subunit, where it forms part of the central protuberance. In the 70S ribosome it contacts protein S13 of the 30S subunit (bridge B1b), connecting the 2 subunits; this bridge is implicated in subunit movement. Contacts the P site tRNA; the 5S rRNA and some of its associated proteins might help stabilize positioning of ribosome-bound tRNAs. The protein is Large ribosomal subunit protein uL5 of Staphylococcus aureus (strain MW2).